An 835-amino-acid chain; its full sequence is Axin-1 (835 aa).

Residues 16–60 (LGSSFTEDAPRPPVPGEEGDLVSSDGRQYNHSFYSSKSDSLKNEA) form a disordered region. The segment covering 40-53 (DGRQYNHSFYSSKS) has biased composition (polar residues). In terms of domain architecture, RGS spans 92 to 214 (SLHSLLDDQD…LKSDIYLEYT (123 aa)). The tract at residues 318-349 (ATSANDSEQQSMSSDADTLSLTDSSVDGVPPY) is disordered. Low complexity predominate over residues 328–344 (SMSSDADTLSLTDSSVD). The interaction with GSK3B stretch occupies residues 351-436 (YRKPHRREIH…DADISTGPSL (86 aa)). An interaction with beta-catenin region spans residues 437–512 (ANHRVPPAVH…SPDGLPAGKI (76 aa)). Disordered regions lie at residues 485–530 (KTPG…QARQ) and 602–627 (GYSS…FEMR). Positions 616-627 (RKGEDGRNFEMR) are enriched in basic and acidic residues. The 83-residue stretch at 753–835 (CENITVAYYF…KIIGKVEKVD (83 aa)) folds into the DIX domain.

Homodimer. Interacts with dixdc1. Interacts with hwa; leading to promote the tankyrase-mediated degradation of axin1. ADP-ribosylated by tankyrase tnks and tnks2. Poly-ADP-ribosylated protein is recognized by rnf146, followed by ubiquitination at 'Lys-48' and subsequent activation of the Wnt signaling pathway. In terms of processing, ubiquitinated by rnf146 when poly-ADP-ribosylated, leading to its degradation and subsequent activation of the Wnt signaling pathway.

The protein resides in the cytoplasm. Its subcellular location is the nucleus. It localises to the membrane. The protein localises to the cell membrane. Component of the beta-catenin destruction complex required for regulating ctnnb1 levels through phosphorylation and ubiquitination, and modulating Wnt-signaling. Controls dorsoventral patterning via two opposing effects: down-regulates ctnnb1 to inhibit the Wnt signaling pathway and ventralize embryos, but also dorsalizes embryos by activating a Wnt-independent JNK signaling pathway. The sequence is that of Axin-1 (axin1) from Danio rerio (Zebrafish).